The following is a 94-amino-acid chain: MLKPLGDRVVIELVQAEEKTASGIVLPDTAKEKPQEGKVIAVGTGRVLENGERVALEVAAGDLIIFSKYAGTEVKYEGTDYLILRESDILAVIG.

Belongs to the GroES chaperonin family. In terms of assembly, heptamer of 7 subunits arranged in a ring. Interacts with the chaperonin GroEL.

The protein resides in the cytoplasm. Functionally, together with the chaperonin GroEL, plays an essential role in assisting protein folding. The GroEL-GroES system forms a nano-cage that allows encapsulation of the non-native substrate proteins and provides a physical environment optimized to promote and accelerate protein folding. GroES binds to the apical surface of the GroEL ring, thereby capping the opening of the GroEL channel. The sequence is that of Co-chaperonin GroES from Bacillus cereus (strain ZK / E33L).